We begin with the raw amino-acid sequence, 157 residues long: uncharacterized protein (157 aa).

Lysine 115 is covalently cross-linked (Isoglutamyl lysine isopeptide (Lys-Gln) (interchain with Q-Cter in protein Pup)).

This is an uncharacterized protein from Mycolicibacterium smegmatis (strain ATCC 700084 / mc(2)155) (Mycobacterium smegmatis).